A 226-amino-acid chain; its full sequence is V-type proton ATPase subunit E (226 aa).

This sequence belongs to the V-ATPase E subunit family. V-ATPase is a heteromultimeric enzyme made up of two complexes: the ATP-hydrolytic V1 complex and the proton translocation V0 complex. The V1 complex consists of three catalytic AB heterodimers that form a heterohexamer, three peripheral stalks each consisting of EG heterodimers, one central rotor including subunits D and F, and the regulatory subunits C and H. The proton translocation complex V0 consists of the proton transport subunit a, a ring of proteolipid subunits c9c'', rotary subunit d, subunits e and f, and the accessory subunits vah-19/Ac45 and vah-20/PRR. In terms of tissue distribution, expressed in the excretory cell and syncytial hypodermal cells (at protein level). Expressed in the intestine (at protein level).

Its subcellular location is the cytoplasm. The protein resides in the apical cell membrane. In terms of biological role, subunit of the V1 complex of vacuolar(H+)-ATPase (V-ATPase), a multisubunit enzyme composed of a peripheral complex (V1) that hydrolyzes ATP and a membrane integral complex (V0) that translocates protons. V-ATPase is responsible for acidifying and maintaining the pH of intracellular compartments and in some cell types, is targeted to the plasma membrane, where it is responsible for acidifying the extracellular environment. Regulates pH homeostasis in the intestine. Probably by regulating cytoplasmic pH, required for cell survival in the intestine and hypodermis. Involved in receptor-mediated endocytosis. Involved in embryogenesis and larval development. The sequence is that of V-type proton ATPase subunit E from Caenorhabditis elegans.